The chain runs to 209 residues: FMN-dependent NADH:quinone oxidoreductase 2 (209 aa).

Residue 17-19 (SAS) coordinates FMN.

The protein belongs to the azoreductase type 1 family. Homodimer. It depends on FMN as a cofactor.

It catalyses the reaction 2 a quinone + NADH + H(+) = 2 a 1,4-benzosemiquinone + NAD(+). The catalysed reaction is N,N-dimethyl-1,4-phenylenediamine + anthranilate + 2 NAD(+) = 2-(4-dimethylaminophenyl)diazenylbenzoate + 2 NADH + 2 H(+). Quinone reductase that provides resistance to thiol-specific stress caused by electrophilic quinones. Functionally, also exhibits azoreductase activity. Catalyzes the reductive cleavage of the azo bond in aromatic azo compounds to the corresponding amines. The protein is FMN-dependent NADH:quinone oxidoreductase 2 of Lactiplantibacillus plantarum (strain ATCC BAA-793 / NCIMB 8826 / WCFS1) (Lactobacillus plantarum).